Consider the following 1166-residue polypeptide: Tectonin beta-propeller repeat-containing protein 1 (1166 aa).

4 TECPR repeats span residues 209–240 (LSVW…SLVE), 254–285 (DLIW…SMVE), 301–332 (SVVW…IEMV), and 344–376 (DQVW…KAIV). 5 positions are modified to phosphoserine: serine 386, serine 388, serine 391, serine 413, and serine 418. The interval 404-496 (RGSGTESAPS…PAELPWTNID (93 aa)) is disordered. Positions 407–416 (GTESAPSDTD) are enriched in polar residues. Polar residues predominate over residues 451 to 462 (TSGNTDHSTENA). Basic and acidic residues predominate over residues 466-481 (EGKEKAPETSRSDECR). In terms of domain architecture, PH spans 616–722 (KTGALQWWCD…WLALLSLSCC (107 aa)). The stretch at 734 to 761 (QAIWSVTCKGDIFVSEPSPDLEARERLL) is one TECPR 5 repeat. A Phosphoserine modification is found at serine 943. TECPR repeat units follow at residues 958–989 (VALW…LHVG), 1003–1034 (YQVW…YHIP), 1049–1080 (TSVY…EHVS), and 1092–1132 (DQVW…DYGI).

The protein belongs to the TECPR1 family. Interacts with ATG5; the interaction is direct. Interacts with WIPI2. Interacts with the ATG5-ATG12 conjugate, the interaction is however mutually exclusive with ATG16, since it does not interact with ATG12-ATG5-ATG16 complex.

It localises to the cytoplasmic vesicle. It is found in the autophagosome membrane. The protein resides in the lysosome membrane. Functionally, tethering factor involved in autophagy. Involved in autophagosome maturation by promoting the autophagosome fusion with lysosomes: acts by associating with both the ATG5-ATG12 conjugate and phosphatidylinositol-3-phosphate (PtdIns(3)P) present at the surface of autophagosomes. Also involved in selective autophagy against bacterial pathogens, by being required for phagophore/preautophagosomal structure biogenesis and maturation. This chain is Tectonin beta-propeller repeat-containing protein 1 (Tecpr1), found in Mus musculus (Mouse).